Consider the following 409-residue polypeptide: Dipeptidase 1 (409 aa).

Residues 1–16 (MWTSWWLWPLVAVCAA) form the signal peptide. 2 residues coordinate Zn(2+): H36 and D38. N57 carries N-linked (GlcNAc...) asparagine glycosylation. C87 and C170 form a disulfide bridge. E141 provides a ligand contact to Zn(2+). H168 serves as a coordination point for substrate. Zn(2+) contacts are provided by H214 and H235. The cysteines at positions 242 and 274 are disulfide-linked. R246 is a substrate binding site. N279 carries N-linked (GlcNAc...) asparagine glycosylation. Position 304 (D304) interacts with substrate. S384 carries GPI-anchor amidated serine lipidation. A propeptide spans 385–409 (AAPSLHLPPGSLLASLVPLLLLSLP) (removed in mature form).

This sequence belongs to the metallo-dependent hydrolases superfamily. Peptidase M19 family. In terms of assembly, homodimer; disulfide-linked. It depends on Zn(2+) as a cofactor.

The protein localises to the apical cell membrane. The protein resides in the cell projection. It is found in the microvillus membrane. Its subcellular location is the cell membrane. The catalysed reaction is an L-aminoacyl-L-amino acid + H2O = 2 an L-alpha-amino acid. It catalyses the reaction leukotriene D4 + H2O = leukotriene E4 + glycine. The enzyme catalyses L-cystine-bis-glycine + 2 H2O = L-cystine + 2 glycine. It carries out the reaction a beta-lactam + H2O = a substituted beta-amino acid. The catalysed reaction is glycyldehydrophenylalanine + H2O = 2,3-didehydrophenylalanine + glycine. Inhibited by L-penicillamine. Inhibited by cilastatin. Functionally, hydrolyzes a wide range of dipeptides. Hydrolyzes the conversion of leukotriene D4 to leukotriene E4. Hydrolyzes cystinyl-bis-glycine (cys-bis-gly) formed during glutathione degradation. Also possesses beta lactamase activity and hydrolytically inactivates beta-lactam antibiotics. In terms of biological role, independently of its dipeptidase activity, acts as an adhesion receptor for neutrophil recruitment from bloodstream into inflamed lungs and liver. The polypeptide is Dipeptidase 1 (DPEP1) (Sus scrofa (Pig)).